Reading from the N-terminus, the 290-residue chain is Ribonuclease HIII (290 aa).

The region spanning 78-290 is the RNase H type-2 domain; that stretch reads LPLIGTDEVG…FKNTEKAKNA (213 aa). A divalent metal cation-binding residues include aspartate 84, glutamate 85, and aspartate 187.

This sequence belongs to the RNase HII family. RnhC subfamily. Requires Mn(2+) as cofactor. The cofactor is Mg(2+).

Its subcellular location is the cytoplasm. It carries out the reaction Endonucleolytic cleavage to 5'-phosphomonoester.. In terms of biological role, endonuclease that specifically degrades the RNA of RNA-DNA hybrids. The sequence is that of Ribonuclease HIII from Streptococcus pneumoniae serotype 2 (strain D39 / NCTC 7466).